A 269-amino-acid chain; its full sequence is uncharacterized protein (269 aa).

The ompR/PhoB-type DNA-binding region spans 3 to 105 (WIINDNIEFW…VPRRGFKIHN (103 aa)).

It to V.cholerae cholera toxin transcriptional activator (ToxR).

This is an uncharacterized protein from Escherichia coli (strain K12).